We begin with the raw amino-acid sequence, 92 residues long: Small ribosomal subunit protein uS19c (92 aa).

It belongs to the universal ribosomal protein uS19 family.

It is found in the plastid. The protein localises to the chloroplast. In terms of biological role, protein S19 forms a complex with S13 that binds strongly to the 16S ribosomal RNA. In Draba nemorosa (Woodland whitlowgrass), this protein is Small ribosomal subunit protein uS19c.